Consider the following 404-residue polypeptide: Argininosuccinate synthase (404 aa).

ATP is bound by residues 10-18 and alanine 37; that span reads AYSGGLDTS. Tyrosine 88 and serine 93 together coordinate L-citrulline. Glycine 118 serves as a coordination point for ATP. L-aspartate contacts are provided by threonine 120, asparagine 124, and aspartate 125. An L-citrulline-binding site is contributed by asparagine 124. L-citrulline is bound by residues arginine 128, serine 178, serine 187, glutamate 263, and tyrosine 275.

It belongs to the argininosuccinate synthase family. Type 1 subfamily. Homotetramer.

The protein resides in the cytoplasm. The catalysed reaction is L-citrulline + L-aspartate + ATP = 2-(N(omega)-L-arginino)succinate + AMP + diphosphate + H(+). Its pathway is amino-acid biosynthesis; L-arginine biosynthesis; L-arginine from L-ornithine and carbamoyl phosphate: step 2/3. The polypeptide is Argininosuccinate synthase (Hahella chejuensis (strain KCTC 2396)).